The primary structure comprises 569 residues: 5'-AMP-activated protein kinase subunit gamma-2 (569 aa).

The segment at 1–222 (MGSAVMDTKK…TRPPLASPTH (222 aa)) is disordered. Phosphoserine occurs at positions 65, 71, 73, 90, 138, 143, 161, and 162. The segment covering 156 to 167 (TSGLSSSPSTPT) has biased composition (low complexity). A Phosphothreonine modification is found at threonine 165. The span at 179–189 (SYKHEPERLEN) shows a compositional bias: basic and acidic residues. Over residues 192–212 (YASSSPPDTGQRFCPSSFQSP) the composition is skewed to polar residues. The residue at position 196 (serine 196) is a Phosphoserine. 3 CBS domains span residues 275–335 (PTSS…KSPM), 357–415 (TFKP…MSDM), and 430–492 (IGTY…NLDI). ADP contacts are provided by residues arginine 302, 317–322 (MLTITD), valine 362, 383–384 (HR), and lysine 402. AMP-binding positions include arginine 302, 317 to 322 (MLTITD), valine 362, histidine 383, 383 to 384 (HR), lysine 402, threonine 432, alanine 437, 458 to 459 (SA), 474 to 477 (SKFD), arginine 501, histidine 530, 530 to 531 (HR), and 546 to 549 (SLSD). ATP is bound by residues arginine 302, 317-322 (MLTITD), valine 362, 383-384 (HR), arginine 384, and lysine 402. The AMPK pseudosubstrate motif lies at 370–391 (LFDAVYSLIKNKIHRLPVIDPI). ADP contacts are provided by residues 474–477 (SKFD), arginine 501, and 530–531 (HR). Residues 474–477 (SKFD), arginine 501, and 530–531 (HR) each bind ATP. The region spanning 504–562 (YFEGVVKCNKLEILETIVDRIVRAEVHRLVVVNEADSIVGIISLSDILQALILTPAGAK) is the CBS 4 domain.

The protein belongs to the 5'-AMP-activated protein kinase gamma subunit family. In terms of assembly, AMPK is a heterotrimer of an alpha catalytic subunit (PRKAA1 or PRKAA2), a beta (PRKAB1 or PRKAB2) and a gamma non-catalytic subunits (PRKAG1, PRKAG2 or PRKAG3). Interacts with FNIP1 and FNIP2. Phosphorylated by ULK1; leading to negatively regulate AMPK activity and suggesting the existence of a regulatory feedback loop between ULK1 and AMPK. Post-translationally, glycosylated; O-GlcNAcylated by OGT, promoting the AMP-activated protein kinase (AMPK) activity. Isoform B is ubiquitously expressed except in liver and thymus. The highest level is detected in heart with abundant expression in placenta and testis.

AMP/ATP-binding subunit of AMP-activated protein kinase (AMPK), an energy sensor protein kinase that plays a key role in regulating cellular energy metabolism. In response to reduction of intracellular ATP levels, AMPK activates energy-producing pathways and inhibits energy-consuming processes: inhibits protein, carbohydrate and lipid biosynthesis, as well as cell growth and proliferation. AMPK acts via direct phosphorylation of metabolic enzymes, and by longer-term effects via phosphorylation of transcription regulators. Also acts as a regulator of cellular polarity by remodeling the actin cytoskeleton; probably by indirectly activating myosin. Gamma non-catalytic subunit mediates binding to AMP, ADP and ATP, leading to activate or inhibit AMPK: AMP-binding results in allosteric activation of alpha catalytic subunit (PRKAA1 or PRKAA2) both by inducing phosphorylation and preventing dephosphorylation of catalytic subunits. ADP also stimulates phosphorylation, without stimulating already phosphorylated catalytic subunit. ATP promotes dephosphorylation of catalytic subunit, rendering the AMPK enzyme inactive. This Homo sapiens (Human) protein is 5'-AMP-activated protein kinase subunit gamma-2 (PRKAG2).